Reading from the N-terminus, the 258-residue chain is uncharacterized protein (258 aa).

The first 19 residues, 1-19 (MVGILPLCCSGCVPSLCCS), serve as a signal peptide directing secretion. The next 3 helical transmembrane spans lie at 94–114 (GLLLPCLLGVGSWLLFNNWTG), 197–217 (CLILGIFLFCFVLAVIGLPYI), and 219–239 (PGLSLSVALLWQSLILLSSLV).

It is found in the membrane. This is an uncharacterized protein from Homo sapiens (Human).